Consider the following 291-residue polypeptide: Transcription initiation factor IIE subunit beta (291 aa).

Residue Met-1 is modified to N-acetylmethionine. Residues 1 to 13 (MDPSLLRERELFK) show a composition bias toward basic and acidic residues. A disordered region spans residues 1-63 (MDPSLLRERE…NSDHSNGSFN (63 aa)). The segment covering 50 to 62 (GSKQNSDHSNGSF) has biased composition (polar residues). The residue at position 61 (Ser-61) is a Phosphoserine. The TFIIE beta DNA-binding region spans 66–146 (ALSGSSGYKF…YAFKPKYNVR (81 aa)). At Lys-74 the chain carries N6-acetyllysine. Positions 243-272 (SSMQESGPKKVAPIQRRKKPASQKKRRFKT) are disordered. A compositionally biased stretch (basic residues) spans 257–271 (QRRKKPASQKKRRFK).

Belongs to the TFIIE beta subunit family. Tetramer of two alpha and two beta chains. Interacts with FACT subunit SUPT16H. Interacts with ATF7IP. Interacts with SND1. Part of TBP-based Pol II pre-initiation complex (PIC), in which Pol II core assembles with general transcription factors and other specific initiation factors including GTF2E1, GTF2E2, GTF2F1, GTF2F2, TCEA1, ERCC2, ERCC3, GTF2H2, GTF2H3, GTF2H4, GTF2H5, GTF2A1, GTF2A2, GTF2B and TBP; this large multi-subunit PIC complex mediates DNA unwinding and targets Pol II core to the transcription start site where the first phosphodiester bond forms.

It localises to the nucleus. Functionally, recruits TFIIH to the initiation complex and stimulates the RNA polymerase II C-terminal domain kinase and DNA-dependent ATPase activities of TFIIH. Both TFIIH and TFIIE are required for promoter clearance by RNA polymerase. In Homo sapiens (Human), this protein is Transcription initiation factor IIE subunit beta (GTF2E2).